The primary structure comprises 339 residues: DNA-directed RNA polymerase subunit alpha (339 aa).

The alpha N-terminal domain (alpha-NTD) stretch occupies residues 1–238 (MVDPIVTKNW…EQLSIFINFD (238 aa)). The interval 250–339 (VEEQKLNENL…KAAPQGAPKV (90 aa)) is alpha C-terminal domain (alpha-CTD).

Belongs to the RNA polymerase alpha chain family. In terms of assembly, homodimer. The RNAP catalytic core consists of 2 alpha, 1 beta, 1 beta' and 1 omega subunit. When a sigma factor is associated with the core the holoenzyme is formed, which can initiate transcription.

The catalysed reaction is RNA(n) + a ribonucleoside 5'-triphosphate = RNA(n+1) + diphosphate. Functionally, DNA-dependent RNA polymerase catalyzes the transcription of DNA into RNA using the four ribonucleoside triphosphates as substrates. The protein is DNA-directed RNA polymerase subunit alpha of Anaeromyxobacter dehalogenans (strain 2CP-C).